The following is a 119-amino-acid chain: Phosphoribosyl-AMP cyclohydrolase (119 aa).

D77 contacts Mg(2+). Residue C78 participates in Zn(2+) binding. Residues D79 and D81 each coordinate Mg(2+). The Zn(2+) site is built by C94 and C101.

Belongs to the PRA-CH family. Homodimer. Mg(2+) serves as cofactor. Zn(2+) is required as a cofactor.

It localises to the cytoplasm. The enzyme catalyses 1-(5-phospho-beta-D-ribosyl)-5'-AMP + H2O = 1-(5-phospho-beta-D-ribosyl)-5-[(5-phospho-beta-D-ribosylamino)methylideneamino]imidazole-4-carboxamide. Its pathway is amino-acid biosynthesis; L-histidine biosynthesis; L-histidine from 5-phospho-alpha-D-ribose 1-diphosphate: step 3/9. Functionally, catalyzes the hydrolysis of the adenine ring of phosphoribosyl-AMP. The polypeptide is Phosphoribosyl-AMP cyclohydrolase (Dinoroseobacter shibae (strain DSM 16493 / NCIMB 14021 / DFL 12)).